Reading from the N-terminus, the 521-residue chain is Occludin (521 aa).

The tract at residues 1–20 is disordered; it reads MSVRPFESPPPYRPDEFKPN. Residues 1–66 lie on the Cytoplasmic side of the membrane; sequence MSVRPFESPP…KWTSPPGVIR (66 aa). The region spanning 60-267 is the MARVEL domain; it reads SPPGVIRILS…IIFFAVKTRR (208 aa). The chain crosses the membrane as a helical span at residues 67 to 89; the sequence is ILSMLIIVMCIAIFACVASTLAW. Topologically, residues 90–133 are extracellular; it reads DRGYGTGLFGGSLNYPYSGFGYGGGYGGGYGGYGYGYGGYTDPR. A helical membrane pass occupies residues 134–158; that stretch reads AAKGFLLAMAAFCFIASLVIFVTSV. Residues 159-168 lie on the Cytoplasmic side of the membrane; that stretch reads IRSGMSRTRR. Residues 169-193 traverse the membrane as a helical segment; the sequence is YYLIVIIVSAILGIMVFIATIVYIM. Residues 194-241 are Extracellular-facing; that stretch reads GVNPTAQASGSMYGSQIYMICNQFYTPGGTGLYVDQYLYHYCVVDPQE. A disulfide bridge links Cys-214 with Cys-235. Residues 242 to 263 form a helical membrane-spanning segment; sequence AIAIVLGFMIIVAFALIIFFAV. The Cytoplasmic portion of the chain corresponds to 264 to 521; the sequence is KTRRKMDRYD…MVGDYDRRKP (258 aa). Phosphoserine is present on Ser-300. The interval 300–329 is disordered; that stretch reads SAGTQDMPPPPSDYAERVDSPMAYSSNGKV. Thr-303 carries the phosphothreonine modification. Ser-311 and Ser-319 each carry phosphoserine. The residue at position 338 (Ser-338) is a Phosphoserine; by PKC; in vitro. Ser-358 carries the post-translational modification Phosphoserine. The interval 361-405 is disordered; the sequence is DFRQPRYSSNGNLETPSKRAPTKGKAGKGKRTDPDHYETDYTTGG. A compositionally biased stretch (polar residues) spans 366–375; it reads RYSSNGNLET. Tyr-367 is subject to Phosphotyrosine. Phosphoserine occurs at positions 368 and 369. Positions 380-389 are enriched in basic residues; it reads APTKGKAGKG. Residues 390-399 are compositionally biased toward basic and acidic residues; it reads KRTDPDHYET. Phosphotyrosine occurs at positions 397 and 401. A Phosphothreonine; by PKC/PRKCH modification is found at Thr-402. Thr-403 carries the phosphothreonine modification. Ser-407 bears the Phosphoserine mark. One can recognise an OCEL domain in the interval 413–521; sequence EDWVREYPPI…MVGDYDRRKP (109 aa). Positions 424 to 488 form a coiled coil; the sequence is SDQQRQLYKR…EYNRLKQVKG (65 aa). A Phosphoserine modification is found at Ser-489.

The protein belongs to the ELL/occludin family. In terms of assembly, interacts with TJP1/ZO1. Interacts with VAPA. Interacts with CLDN1, CLDN6, CLDN9, CLDN11, CLDN12 and CLDN17. Interacts with PLSCR1. Interacts with LSR, ILDR1 and ILDR2. Interacts with TJP2/ZO2. In terms of processing, dephosphorylated by PTPRJ. May be phosphorylated by PKC during translocation to cell-cell contacts. In terms of tissue distribution, localized at tight junctions of both epithelial and endothelial cells. Highly expressed in the testis, kidney, lung, liver and brain. Not detected in skeletal muscle, spleen and heart.

Its subcellular location is the cell membrane. It is found in the cell junction. The protein localises to the tight junction. May play a role in the formation and regulation of the tight junction (TJ) paracellular permeability barrier. This is Occludin (Ocln) from Mus musculus (Mouse).